The chain runs to 95 residues: MSVDLATVKRVAKLARIAVSEDEANRMVGELNGILGFVEQLSEVNVEGVEAMTSVTPMAMKKRADAVTDGNKAADIVANAPVTDHNFFLVPKVVE.

Belongs to the GatC family. Heterotrimer of A, B and C subunits.

It catalyses the reaction L-glutamyl-tRNA(Gln) + L-glutamine + ATP + H2O = L-glutaminyl-tRNA(Gln) + L-glutamate + ADP + phosphate + H(+). It carries out the reaction L-aspartyl-tRNA(Asn) + L-glutamine + ATP + H2O = L-asparaginyl-tRNA(Asn) + L-glutamate + ADP + phosphate + 2 H(+). Its function is as follows. Allows the formation of correctly charged Asn-tRNA(Asn) or Gln-tRNA(Gln) through the transamidation of misacylated Asp-tRNA(Asn) or Glu-tRNA(Gln) in organisms which lack either or both of asparaginyl-tRNA or glutaminyl-tRNA synthetases. The reaction takes place in the presence of glutamine and ATP through an activated phospho-Asp-tRNA(Asn) or phospho-Glu-tRNA(Gln). The protein is Aspartyl/glutamyl-tRNA(Asn/Gln) amidotransferase subunit C of Rhizobium etli (strain CIAT 652).